Reading from the N-terminus, the 203-residue chain is Glycerol-3-phosphate acyltransferase (203 aa).

The next 5 helical transmembrane spans lie at 13–33 (TLAC…LILT), 66–86 (TLLL…LWGV), 88–108 (AGMA…WLSF), 118–138 (IGVL…AWLA), and 156–176 (IIPV…FAVM).

This sequence belongs to the PlsY family. Probably interacts with PlsX.

The protein resides in the cell inner membrane. The enzyme catalyses an acyl phosphate + sn-glycerol 3-phosphate = a 1-acyl-sn-glycero-3-phosphate + phosphate. It participates in lipid metabolism; phospholipid metabolism. In terms of biological role, catalyzes the transfer of an acyl group from acyl-phosphate (acyl-PO(4)) to glycerol-3-phosphate (G3P) to form lysophosphatidic acid (LPA). This enzyme utilizes acyl-phosphate as fatty acyl donor, but not acyl-CoA or acyl-ACP. In Sinorhizobium medicae (strain WSM419) (Ensifer medicae), this protein is Glycerol-3-phosphate acyltransferase.